Consider the following 421-residue polypeptide: ATP-dependent RNA helicase RhlB (421 aa).

Residues 9-37 (QKFSDFALHPKVVEALEKKGFHNCTPIQA) carry the Q motif motif. The Helicase ATP-binding domain maps to 40-219 (LPLTLAGRDV…FEQMNNAEYI (180 aa)). 53–60 (AQTGTGKT) is a binding site for ATP. The DEAD box signature appears at 165-168 (DEAD). The Helicase C-terminal domain maps to 245-390 (RLLQTLIEEE…VSKYNPDALM (146 aa)). The disordered stretch occupies residues 392–421 (DLPKPLRLTRPRTGNGPRRTGTPRNRRRSG). Over residues 402–414 (PRTGNGPRRTGTP) the composition is skewed to low complexity.

Belongs to the DEAD box helicase family. RhlB subfamily. As to quaternary structure, component of the RNA degradosome, which is a multiprotein complex involved in RNA processing and mRNA degradation.

Its subcellular location is the cytoplasm. The enzyme catalyses ATP + H2O = ADP + phosphate + H(+). DEAD-box RNA helicase involved in RNA degradation. Has RNA-dependent ATPase activity and unwinds double-stranded RNA. The chain is ATP-dependent RNA helicase RhlB from Escherichia coli O7:K1 (strain IAI39 / ExPEC).